We begin with the raw amino-acid sequence, 209 residues long: Ribonuclease HII (209 aa).

The RNase H type-2 domain occupies 19 to 208 (GLVAGVDEAG…VARALQAPVA (190 aa)). A divalent metal cation-binding residues include aspartate 25, glutamate 26, and aspartate 117.

This sequence belongs to the RNase HII family. Mn(2+) is required as a cofactor. It depends on Mg(2+) as a cofactor.

It is found in the cytoplasm. The catalysed reaction is Endonucleolytic cleavage to 5'-phosphomonoester.. In terms of biological role, endonuclease that specifically degrades the RNA of RNA-DNA hybrids. This chain is Ribonuclease HII, found in Acidovorax ebreus (strain TPSY) (Diaphorobacter sp. (strain TPSY)).